The sequence spans 276 residues: 2,3,4,5-tetrahydropyridine-2,6-dicarboxylate N-succinyltransferase (276 aa).

Substrate contacts are provided by arginine 104 and aspartate 141.

It belongs to the transferase hexapeptide repeat family. As to quaternary structure, homotrimer.

The protein localises to the cytoplasm. It catalyses the reaction (S)-2,3,4,5-tetrahydrodipicolinate + succinyl-CoA + H2O = (S)-2-succinylamino-6-oxoheptanedioate + CoA. It functions in the pathway amino-acid biosynthesis; L-lysine biosynthesis via DAP pathway; LL-2,6-diaminopimelate from (S)-tetrahydrodipicolinate (succinylase route): step 1/3. The polypeptide is 2,3,4,5-tetrahydropyridine-2,6-dicarboxylate N-succinyltransferase (Pseudoalteromonas translucida (strain TAC 125)).